We begin with the raw amino-acid sequence, 514 residues long: 2-isopropylmalate synthase (514 aa).

The 263-residue stretch at 4–266 (INVFDTSLRD…KTGLKLSELK (263 aa)) folds into the Pyruvate carboxyltransferase domain. 4 residues coordinate Mn(2+): D13, H201, H203, and N237. The segment at 390–514 (ELTALQVTYG…AKREMAKVES (125 aa)) is regulatory domain.

The protein belongs to the alpha-IPM synthase/homocitrate synthase family. LeuA type 1 subfamily. In terms of assembly, homodimer. It depends on Mn(2+) as a cofactor.

It localises to the cytoplasm. It catalyses the reaction 3-methyl-2-oxobutanoate + acetyl-CoA + H2O = (2S)-2-isopropylmalate + CoA + H(+). Its pathway is amino-acid biosynthesis; L-leucine biosynthesis; L-leucine from 3-methyl-2-oxobutanoate: step 1/4. Functionally, catalyzes the condensation of the acetyl group of acetyl-CoA with 3-methyl-2-oxobutanoate (2-ketoisovalerate) to form 3-carboxy-3-hydroxy-4-methylpentanoate (2-isopropylmalate). The sequence is that of 2-isopropylmalate synthase from Shouchella clausii (strain KSM-K16) (Alkalihalobacillus clausii).